We begin with the raw amino-acid sequence, 595 residues long: Probable Xaa-Pro aminopeptidase CHGG_02942 (595 aa).

The segment at 51 to 76 (KSGPSSSNLSPSTLSTEKTSSDSSGV) is disordered. Residues 52 to 66 (SGPSSSNLSPSTLST) show a composition bias toward low complexity. Mn(2+)-binding residues include Asp334, Asp345, Glu541, and Glu563.

The protein belongs to the peptidase M24B family. Mn(2+) is required as a cofactor.

The enzyme catalyses Release of any N-terminal amino acid, including proline, that is linked to proline, even from a dipeptide or tripeptide.. Catalyzes the removal of a penultimate prolyl residue from the N-termini of peptides. The polypeptide is Probable Xaa-Pro aminopeptidase CHGG_02942 (Chaetomium globosum (strain ATCC 6205 / CBS 148.51 / DSM 1962 / NBRC 6347 / NRRL 1970) (Soil fungus)).